The chain runs to 454 residues: Trichosetin biosynthesis cluster transcription factor TF22 (454 aa).

Positions 13 to 47 form a DNA-binding region, zn(2)-C6 fungal-type; that stretch reads CDRCRSHKLKCTVSPEDSRSGPHKCTRCIRAQVTC. Residues 51 to 89 form a disordered region; that stretch reads PRSQSKRTPNGKNKPEKPKPELEPPQKTSPPVCSSSLAG. The segment covering 52–61 has biased composition (polar residues); that stretch reads RSQSKRTPNG. Basic and acidic residues predominate over residues 63–74; that stretch reads NKPEKPKPELEP.

Its subcellular location is the nucleus. Its function is as follows. Transcription factor that regulates the expression of the gene cluster that mediates the biosynthesis of trichosetin, a trans-fused decalin-containing tetramic acid with antimicrobial activity. Directly activates expression of only the three biosynthetic genes PKS-NRPS1, DA and ER, while TF23 and MFS-T are induced by the final product trichosetin and not by TF22. The sequence is that of Trichosetin biosynthesis cluster transcription factor TF22 from Gibberella fujikuroi (strain CBS 195.34 / IMI 58289 / NRRL A-6831) (Bakanae and foot rot disease fungus).